The primary structure comprises 346 residues: Biotin synthase (346 aa).

One can recognise a Radical SAM core domain in the interval 38–256 (KQIQVSTLLS…IAVARIMMPT (219 aa)). [4Fe-4S] cluster-binding residues include C53, C57, and C60. [2Fe-2S] cluster is bound by residues C97, C128, C188, and R260.

It belongs to the radical SAM superfamily. Biotin synthase family. In terms of assembly, homodimer. [4Fe-4S] cluster is required as a cofactor. The cofactor is [2Fe-2S] cluster.

The catalysed reaction is (4R,5S)-dethiobiotin + (sulfur carrier)-SH + 2 reduced [2Fe-2S]-[ferredoxin] + 2 S-adenosyl-L-methionine = (sulfur carrier)-H + biotin + 2 5'-deoxyadenosine + 2 L-methionine + 2 oxidized [2Fe-2S]-[ferredoxin]. The protein operates within cofactor biosynthesis; biotin biosynthesis; biotin from 7,8-diaminononanoate: step 2/2. Catalyzes the conversion of dethiobiotin (DTB) to biotin by the insertion of a sulfur atom into dethiobiotin via a radical-based mechanism. This is Biotin synthase from Salmonella arizonae (strain ATCC BAA-731 / CDC346-86 / RSK2980).